Consider the following 275-residue polypeptide: 4-diphosphocytidyl-2-C-methyl-D-erythritol kinase (275 aa).

Residue Lys-14 is part of the active site. 98–108 (PMGAGLGGGSS) lines the ATP pocket. Residue Asp-140 is part of the active site.

It belongs to the GHMP kinase family. IspE subfamily.

The enzyme catalyses 4-CDP-2-C-methyl-D-erythritol + ATP = 4-CDP-2-C-methyl-D-erythritol 2-phosphate + ADP + H(+). It participates in isoprenoid biosynthesis; isopentenyl diphosphate biosynthesis via DXP pathway; isopentenyl diphosphate from 1-deoxy-D-xylulose 5-phosphate: step 3/6. Functionally, catalyzes the phosphorylation of the position 2 hydroxy group of 4-diphosphocytidyl-2C-methyl-D-erythritol. In Francisella tularensis subsp. tularensis (strain WY96-3418), this protein is 4-diphosphocytidyl-2-C-methyl-D-erythritol kinase.